A 40-amino-acid chain; its full sequence is Dolichyl-diphosphooligosaccharide--protein glycosyltransferase subunit 4 (40 aa).

Topologically, residues 1–4 (MITD) are lumenal. A helical transmembrane segment spans residues 5 to 25 (VQLAIFSNVLGVFLFLLVVAY). Topologically, residues 26–40 (HYINANTGKSSIKNK) are cytoplasmic.

This sequence belongs to the OST4 family. As to quaternary structure, component of the oligosaccharyltransferase (OST) complex.

Its subcellular location is the endoplasmic reticulum membrane. In terms of biological role, subunit of the oligosaccharyl transferase (OST) complex that catalyzes the initial transfer of a defined glycan (Glc(3)Man(9)GlcNAc(2) in eukaryotes) from the lipid carrier dolichol-pyrophosphate to an asparagine residue within an Asn-X-Ser/Thr consensus motif in nascent polypeptide chains, the first step in protein N-glycosylation. N-glycosylation occurs cotranslationally and the complex associates with the Sec61 complex at the channel-forming translocon complex that mediates protein translocation across the endoplasmic reticulum (ER). All subunits are required for a maximal enzyme activity. The protein is Dolichyl-diphosphooligosaccharide--protein glycosyltransferase subunit 4 of Drosophila mojavensis (Fruit fly).